The chain runs to 295 residues: MFEKTTDMDIRCNIEENGRISKPKDNKEIRETQAKMPSTYLKEQPGTYPAPGSSELCAKNKSSSAGDPEYCRRILVRDAKGSIREIILPKGLDLDRPKRSRTSFTAEQLYRLEMEFQRCQYVVGRERTDLSRQLNLSETQVKVWFQNRRTKQKKDQGKDSELRSVVSETAATCSVLRLLEQGRLLSPPGLPGLMPPCTTGTLRAPNSSGPGTRSLATVTSTPPHQPGLHPSPTGHNIFNMPVPSLLGTVANRLSSHPLTMAGNLHELSARYLSSSAFEPYSRSISKDSLDKKLLD.

Residues 20–33 (ISKPKDNKEIRETQ) show a composition bias toward basic and acidic residues. The disordered stretch occupies residues 20-63 (ISKPKDNKEIRETQAKMPSTYLKEQPGTYPAPGSSELCAKNKSS). A DNA-binding region (homeobox) is located at residues 97–156 (PKRSRTSFTAEQLYRLEMEFQRCQYVVGRERTDLSRQLNLSETQVKVWFQNRRTKQKKDQ). The tract at residues 203–226 (RAPNSSGPGTRSLATVTSTPPHQP) is disordered. The segment covering 204–222 (APNSSGPGTRSLATVTSTP) has biased composition (polar residues).

This sequence belongs to the EMX homeobox family.

It is found in the nucleus. In terms of biological role, may play a role in the specification and maintenance of basal forebrain identity. This chain is Ventral anterior homeobox 1a (vax1-a), found in Xenopus laevis (African clawed frog).